Here is a 517-residue protein sequence, read N- to C-terminus: Glutamate--tRNA ligase (517 aa).

Positions 10–20 match the 'HIGH' region motif; it reads PSPSGFLHVGG. 4 residues coordinate Zn(2+): C107, C109, C134, and D136. Positions 250-254 match the 'KMSKS' region motif; it reads KLSKR. Residue K253 participates in ATP binding.

This sequence belongs to the class-I aminoacyl-tRNA synthetase family. Glutamate--tRNA ligase type 1 subfamily. Monomer. It depends on Zn(2+) as a cofactor.

It is found in the cytoplasm. The catalysed reaction is tRNA(Glu) + L-glutamate + ATP = L-glutamyl-tRNA(Glu) + AMP + diphosphate. Catalyzes the attachment of glutamate to tRNA(Glu) in a two-step reaction: glutamate is first activated by ATP to form Glu-AMP and then transferred to the acceptor end of tRNA(Glu). The polypeptide is Glutamate--tRNA ligase (Leptospira biflexa serovar Patoc (strain Patoc 1 / ATCC 23582 / Paris)).